A 425-amino-acid chain; its full sequence is UPF0597 protein VIBHAR_03081 (425 aa).

Belongs to the UPF0597 family.

The polypeptide is UPF0597 protein VIBHAR_03081 (Vibrio campbellii (strain ATCC BAA-1116)).